A 578-amino-acid chain; its full sequence is G protein-coupled receptor kinase 4 (578 aa).

Position 1 is an N-acetylmethionine (Met-1). Residues 1-154 form an N-terminal region; it reads MELENIVANS…ECTRVAHNYL (154 aa). An RGS domain is found at 52–172; the sequence is DYSSLCDKQP…QESSYFSQFL (121 aa). Residues 187-449 enclose the Protein kinase domain; the sequence is FRHYRVLGKG…AAGVKQHPVF (263 aa). ATP contacts are provided by residues 193–201 and Lys-216; that span reads LGKGGFGEV. Residue Asp-312 is the Proton acceptor of the active site. Positions 450-515 constitute an AGC-kinase C-terminal domain; sequence KDINFRRLEA…GCVSIPWQNE (66 aa). Residue Ser-485 is modified to Phosphoserine.

The protein belongs to the protein kinase superfamily. AGC Ser/Thr protein kinase family. GPRK subfamily. In terms of assembly, interacts with DRD3. Post-translationally, palmitoylated. In terms of tissue distribution, isoform 1, isoform 2, isoform 3, and isoform 4 are expressed in testis. Isoform 4 is expressed in myometrium.

It localises to the cytoplasm. The protein resides in the cell cortex. The enzyme catalyses [G-protein-coupled receptor] + ATP = [G-protein-coupled receptor]-phosphate + ADP + H(+). Its activity is regulated as follows. Inhibited by heparin. Specifically phosphorylates the activated forms of G protein-coupled receptors. GRK4-alpha can phosphorylate rhodopsin and its activity is inhibited by calmodulin; the other three isoforms do not phosphorylate rhodopsin and do not interact with calmodulin. GRK4-alpha and GRK4-gamma phosphorylate DRD3. Phosphorylates ADRB2. This is G protein-coupled receptor kinase 4 (GRK4) from Homo sapiens (Human).